Here is a 150-residue protein sequence, read N- to C-terminus: Meiotically up-regulated gene 108 protein (150 aa).

The span at 1–11 (MANRFTSSDQT) shows a compositional bias: polar residues. The interval 1-150 (MANRFTSSDQ…RDISLLGSTI (150 aa)) is disordered. Residues 12–23 (QETHGHHVDKHS) are compositionally biased toward basic and acidic residues. Polar residues predominate over residues 83–93 (NRSSQHTGRVN).

Its subcellular location is the cytoplasm. The protein localises to the nucleus. Its function is as follows. Has a role in meiosis. This Schizosaccharomyces pombe (strain 972 / ATCC 24843) (Fission yeast) protein is Meiotically up-regulated gene 108 protein (mug108).